The primary structure comprises 98 residues: Aspartyl/glutamyl-tRNA(Asn/Gln) amidotransferase subunit C (98 aa).

This sequence belongs to the GatC family. As to quaternary structure, heterotrimer of A, B and C subunits.

The enzyme catalyses L-glutamyl-tRNA(Gln) + L-glutamine + ATP + H2O = L-glutaminyl-tRNA(Gln) + L-glutamate + ADP + phosphate + H(+). The catalysed reaction is L-aspartyl-tRNA(Asn) + L-glutamine + ATP + H2O = L-asparaginyl-tRNA(Asn) + L-glutamate + ADP + phosphate + 2 H(+). In terms of biological role, allows the formation of correctly charged Asn-tRNA(Asn) or Gln-tRNA(Gln) through the transamidation of misacylated Asp-tRNA(Asn) or Glu-tRNA(Gln) in organisms which lack either or both of asparaginyl-tRNA or glutaminyl-tRNA synthetases. The reaction takes place in the presence of glutamine and ATP through an activated phospho-Asp-tRNA(Asn) or phospho-Glu-tRNA(Gln). The polypeptide is Aspartyl/glutamyl-tRNA(Asn/Gln) amidotransferase subunit C (Mycobacterium avium (strain 104)).